Here is a 181-residue protein sequence, read N- to C-terminus: Adenine phosphoribosyltransferase (181 aa).

This sequence belongs to the purine/pyrimidine phosphoribosyltransferase family. As to quaternary structure, homodimer.

It is found in the cytoplasm. The enzyme catalyses AMP + diphosphate = 5-phospho-alpha-D-ribose 1-diphosphate + adenine. It functions in the pathway purine metabolism; AMP biosynthesis via salvage pathway; AMP from adenine: step 1/1. Its function is as follows. Catalyzes a salvage reaction resulting in the formation of AMP, that is energically less costly than de novo synthesis. This chain is Adenine phosphoribosyltransferase, found in Pseudoalteromonas translucida (strain TAC 125).